A 371-amino-acid polypeptide reads, in one-letter code: DNA replication and repair protein RecF (371 aa).

30 to 37 (GSNGQGKT) contacts ATP.

It belongs to the RecF family.

The protein resides in the cytoplasm. The RecF protein is involved in DNA metabolism; it is required for DNA replication and normal SOS inducibility. RecF binds preferentially to single-stranded, linear DNA. It also seems to bind ATP. In Acidothermus cellulolyticus (strain ATCC 43068 / DSM 8971 / 11B), this protein is DNA replication and repair protein RecF.